The following is a 386-amino-acid chain: Homoserine O-succinyltransferase (386 aa).

The region spanning 49-358 (NAILICHALS…DAEQGHDSFL (310 aa)) is the AB hydrolase-1 domain. The Nucleophile role is filled by serine 156. Arginine 226 contacts substrate. Active-site residues include aspartate 321 and histidine 354. A substrate-binding site is contributed by aspartate 355.

It belongs to the AB hydrolase superfamily. MetX family. Homodimer.

It localises to the cytoplasm. It carries out the reaction L-homoserine + succinyl-CoA = O-succinyl-L-homoserine + CoA. Its pathway is amino-acid biosynthesis; L-methionine biosynthesis via de novo pathway; O-succinyl-L-homoserine from L-homoserine: step 1/1. Functionally, transfers a succinyl group from succinyl-CoA to L-homoserine, forming succinyl-L-homoserine. The chain is Homoserine O-succinyltransferase from Acinetobacter baumannii (strain ACICU).